Reading from the N-terminus, the 623-residue chain is uncharacterized protein (623 aa).

A GAF domain is found at 28-171 (TSAEVSQRVL…TIATLFAQVQ (144 aa)). Positions 212 to 345 (GPVAALFLDL…GGDSVAIFTA (134 aa)) constitute a GGDEF domain. Positions 354 to 609 (RNDIELHLRR…AMRHMLSARR (256 aa)) constitute an EAL domain.

This is an uncharacterized protein from Mycobacterium tuberculosis (strain CDC 1551 / Oshkosh).